Reading from the N-terminus, the 164-residue chain is S-ribosylhomocysteine lyase (164 aa).

Fe cation-binding residues include H54, H58, and C128.

It belongs to the LuxS family. Homodimer. It depends on Fe cation as a cofactor.

It carries out the reaction S-(5-deoxy-D-ribos-5-yl)-L-homocysteine = (S)-4,5-dihydroxypentane-2,3-dione + L-homocysteine. Involved in the synthesis of autoinducer 2 (AI-2) which is secreted by bacteria and is used to communicate both the cell density and the metabolic potential of the environment. The regulation of gene expression in response to changes in cell density is called quorum sensing. Catalyzes the transformation of S-ribosylhomocysteine (RHC) to homocysteine (HC) and 4,5-dihydroxy-2,3-pentadione (DPD). The protein is S-ribosylhomocysteine lyase of Campylobacter jejuni subsp. doylei (strain ATCC BAA-1458 / RM4099 / 269.97).